The sequence spans 583 residues: Probable GTP diphosphokinase CRSH, chloroplastic (583 aa).

A chloroplast-targeting transit peptide spans 1 to 58 (MSVIRPSPIPIPRCRSQVLHRRLYSIQLIQRRRRRWNPRSEVEDTAIESTARSPEAAG). Positions 112–212 (PLSKALSLSI…MDLVSKLDEM (101 aa)) constitute an HD domain. 2 consecutive EF-hand domains span residues 470–505 (TTTNQRDRVFCLLDKNGDGMISIEELMEVMEELGAP) and 507–539 (EDAEEMMQLLDSNSDGSLSSDEFDTFQKQVEFM). Ca(2+) is bound by residues aspartate 483, asparagine 485, aspartate 487, methionine 489, glutamate 494, aspartate 517, asparagine 519, aspartate 521, serine 523, and glutamate 528.

It belongs to the RelA/SpoT family. As to expression, expressed in shoots, cotyledons, rosette and cauline leaves, stems, sepals, pistils and siliques.

The protein resides in the plastid. Its subcellular location is the chloroplast. The enzyme catalyses GTP + ATP = guanosine 3'-diphosphate 5'-triphosphate + AMP. With respect to regulation, activated by calcium. In terms of biological role, possesses calcium-dependent ppGpp (guanosine 3'-diphosphate 5'-diphosphate) synthetase activity in vitro and is able to functionally complement E.coli relA mutants. Plays an important role in the timing adjustment of pistil and pollen maturation required for successful pollination. May be involved in a rapid plant ppGpp-mediated response to pathogens and other stresses. This Arabidopsis thaliana (Mouse-ear cress) protein is Probable GTP diphosphokinase CRSH, chloroplastic (CRSH).